The primary structure comprises 373 residues: 4-hydroxy-3-methylbut-2-en-1-yl diphosphate synthase (flavodoxin) (373 aa).

[4Fe-4S] cluster contacts are provided by C270, C273, C305, and E312.

It belongs to the IspG family. [4Fe-4S] cluster is required as a cofactor.

The catalysed reaction is (2E)-4-hydroxy-3-methylbut-2-enyl diphosphate + oxidized [flavodoxin] + H2O + 2 H(+) = 2-C-methyl-D-erythritol 2,4-cyclic diphosphate + reduced [flavodoxin]. Its pathway is isoprenoid biosynthesis; isopentenyl diphosphate biosynthesis via DXP pathway; isopentenyl diphosphate from 1-deoxy-D-xylulose 5-phosphate: step 5/6. Its function is as follows. Converts 2C-methyl-D-erythritol 2,4-cyclodiphosphate (ME-2,4cPP) into 1-hydroxy-2-methyl-2-(E)-butenyl 4-diphosphate. This Pectobacterium atrosepticum (strain SCRI 1043 / ATCC BAA-672) (Erwinia carotovora subsp. atroseptica) protein is 4-hydroxy-3-methylbut-2-en-1-yl diphosphate synthase (flavodoxin).